Reading from the N-terminus, the 1066-residue chain is E3 ubiquitin-protein ligase RNF31 (1066 aa).

Positions 1-479 are polyubiquitin-binding; that stretch reads MPGDEERGFL…PEKQRQDKMR (479 aa). Residues 70–141 form the PUB domain; sequence TLSTALNILE…SFPEGQEEPD (72 aa). Positions 251–287 are disordered; sequence LRQALPGSHQTASLSSSLPASSQPRPPSSSLALGDSS. Residues 262-287 are compositionally biased toward low complexity; it reads ASLSSSLPASSQPRPPSSSLALGDSS. RanBP2-type zinc fingers lie at residues 293–325 and 344–373; these read PANA…PKGC and ARDQ…PRLA. A Phosphoserine modification is found at Ser377. The segment at 403 to 432 adopts a RanBP2-type 3 zinc-finger fold; it reads QPQVWYCDHCTFCNSGPVWVCAMCNRTRDP. The tract at residues 434–478 is disordered; it reads PTQPALQSYPSSLEKGRPKPGSSQHLGSSLPASCGDPEKQRQDKM. The span at 454 to 464 shows a compositional bias: polar residues; sequence GSSQHLGSSLP. Positions 469–478 are enriched in basic and acidic residues; the sequence is DPEKQRQDKM. The segment at 557 to 610 is interaction with RBCK1; the sequence is GNLDEAVEECVRARRRKVHELQSLGFGPKEGSLQALFQHGGDVARALTELQRQR. Residues 558–609 enclose the UBA domain; that stretch reads NLDEAVEECVRARRRKVHELQSLGFGPKEGSLQALFQHGGDVARALTELQRQ. Residues 689–923 form a TRIAD supradomain region; the sequence is LAQECAVCGW…KSLHGHHPRD (235 aa). The Zn(2+) site is built by Cys693, Cys696, Cys711, Cys713, Cys716, Cys719, Cys738, Cys741, Cys793, Cys796, Cys811, Cys814, Cys819, Cys822, His830, Cys835, Cys865, and Cys868. The RING-type 1 zinc-finger motif lies at 693–743; it reads CAVCGWALPRNRMQALISCECTICPECFRQHFTIALKEKHITDMVCPACGR. Residues 773-835 form an IBR-type zinc finger; that stretch reads ALFHKKLTEA…WEEQHRGRSC (63 aa). The RING-type 2; atypical zinc finger occupies 865–895; that stretch reads CPKCKFSYALARGGCMHFHCTQCRHQFCSGC. Cys879 is a catalytic residue. 6 residues coordinate Zn(2+): Cys884, Cys887, Cys892, Cys895, Cys910, and His919. Positions 904 to 1066 are LDD domain; that stretch reads KCPDPNCKVK…LGQSIARRRK (163 aa).

Belongs to the RBR family. In terms of assembly, component of the LUBAC complex (linear ubiquitin chain assembly complex) which consists of SHARPIN, RBCK1 and RNF31. LUBAC has a MW of approximately 600 kDa suggesting a heteromultimeric assembly of its subunits. Associates with the TNF-R1 signaling complex (TNF-RSC) in a stimulation-dependent manner. Interacts (via the PUB domain) with OTULIN (via the PIM motif); the interaction is direct. Interacts (via the PUB domain) with VCP (via the PIM motif). Interacts (via the PUB domain) with SPATA2 (via the PIM motif); interaction is direct and bridges RNF31 and CYLD. Interacts with CYLD; the interaction is indirect and is mediated via SPATA2. Interacts with MUSK. Interacts with CARD11, promoting linear ubiquitination of BCL10. Post-translationally, autoubiquitinated. Interaction with OTULIN is required to suppress formation of 'Met-1'-linked polyubiquitin chains and prevent subsequent inactivation of the LUBAC complex. Cleaved by caspase during apoptosis. As to expression, widely expressed (at protein level). Not expressed in heart.

The protein resides in the cytoplasm. It catalyses the reaction [E2 ubiquitin-conjugating enzyme]-S-ubiquitinyl-L-cysteine + [acceptor protein]-L-lysine = [E2 ubiquitin-conjugating enzyme]-L-cysteine + [acceptor protein]-N(6)-ubiquitinyl-L-lysine.. It functions in the pathway protein modification; protein ubiquitination. In terms of biological role, E3 ubiquitin-protein ligase component of the LUBAC complex which conjugates linear ('Met-1'-linked) polyubiquitin chains to substrates and plays a key role in NF-kappa-B activation and regulation of inflammation. LUBAC conjugates linear polyubiquitin to IKBKG and RIPK1 and is involved in activation of the canonical NF-kappa-B and the JNK signaling pathways. Linear ubiquitination mediated by the LUBAC complex interferes with TNF-induced cell death and thereby prevents inflammation. LUBAC is recruited to the TNF-R1 signaling complex (TNF-RSC) following polyubiquitination of TNF-RSC components by BIRC2 and/or BIRC3 and to conjugate linear polyubiquitin to IKBKG and possibly other components contributing to the stability of the complex. The LUBAC complex is also involved in innate immunity by conjugating linear polyubiquitin chains at the surface of bacteria invading the cytosol to form the ubiquitin coat surrounding bacteria. LUBAC is not able to initiate formation of the bacterial ubiquitin coat, and can only promote formation of linear polyubiquitins on pre-existing ubiquitin. Recruited to the surface of bacteria by RNF213, which initiates the bacterial ubiquitin coat. The bacterial ubiquitin coat acts as an 'eat-me' signal for xenophagy and promotes NF-kappa-B activation. Together with OTULIN, the LUBAC complex regulates the canonical Wnt signaling during angiogenesis. RNF31 is required for linear ubiquitination of BCL10, thereby promoting TCR-induced NF-kappa-B activation. Binds polyubiquitin of different linkage types. The sequence is that of E3 ubiquitin-protein ligase RNF31 from Mus musculus (Mouse).